The chain runs to 453 residues: DDB1- and CUL4-associated factor 12 (453 aa).

Residues 1 to 12 (MARKAVSRKRKA) are compositionally biased toward basic residues. The disordered stretch occupies residues 1 to 34 (MARKAVSRKRKASASPGAGSDAQGPQFGWDHSLH). A required for nuclear location and interaction with MOV10 region spans residues 1-38 (MARKAVSRKRKASASPGAGSDAQGPQFGWDHSLHKRKR). Serine 15 is subject to Phosphoserine. WD repeat units follow at residues 138–178 (QQGC…PVCV), 182–220 (GHKD…LTKS), 250–289 (PDNC…SKLL), and 338–375 (ERGS…FLEE).

It belongs to the WD repeat DCAF12 family. As to quaternary structure, component of the DCX(DCAF12) E3 ubiquitin ligase complex, at least composed of CUL4 (CUL4A or CUL4B), DDB1, DCAF12 and RBX1.

It is found in the cytoplasm. It localises to the cytoskeleton. The protein localises to the microtubule organizing center. The protein resides in the centrosome. Its subcellular location is the nucleus. The protein operates within protein modification; protein ubiquitination. Substrate-recognition component of a DCX (DDB1-CUL4-X-box) E3 ubiquitin-protein ligase complex of the DesCEND (destruction via C-end degrons) pathway, which recognizes a C-degron located at the extreme C terminus of target proteins, leading to their ubiquitination and degradation. The C-degron recognized by the DesCEND pathway is usually a motif of less than ten residues and can be present in full-length proteins, truncated proteins or proteolytically cleaved forms. The DCX(DCAF12) complex specifically recognizes proteins with a diglutamate (Glu-Glu) at the C-terminus, such as MAGEA3, MAGEA6 and CCT5, leading to their ubiquitination and degradation. Ubiquitination of MAGEA3, MAGEA6 by DCX(DCAF12) complex is required for starvation-induced autophagy. Also directly recognizes the C-terminal glutamate-leucine (Glu-Leu) degron as an alternative degron in proteins such as MOV10, leading to their ubiquitination and degradation. Controls the protein level of MOV10 during spermatogenesis and in T cells, especially after their activation. In Mus musculus (Mouse), this protein is DDB1- and CUL4-associated factor 12.